Reading from the N-terminus, the 385-residue chain is Alkanesulfonate monooxygenase 2 (385 aa).

The protein belongs to the SsuD family.

The enzyme catalyses an alkanesulfonate + FMNH2 + O2 = an aldehyde + FMN + sulfite + H2O + 2 H(+). Functionally, catalyzes the desulfonation of aliphatic sulfonates. This Mesorhizobium japonicum (strain LMG 29417 / CECT 9101 / MAFF 303099) (Mesorhizobium loti (strain MAFF 303099)) protein is Alkanesulfonate monooxygenase 2 (ssuD2).